The following is a 479-amino-acid chain: Sulfate adenylyltransferase subunit 1 (479 aa).

Residues 25 to 239 form the tr-type G domain; that stretch reads KSLLRFLTCG…EVLETVDIQR (215 aa). The tract at residues 34–41 is G1; it reads GSVDDGKS. 34-41 provides a ligand contact to GTP; that stretch reads GSVDDGKS. The tract at residues 92 to 96 is G2; that stretch reads GITID. The G3 stretch occupies residues 113–116; it reads DTPG. GTP contacts are provided by residues 113-117 and 168-171; these read DTPGH and NKMD. The interval 168-171 is G4; it reads NKMD. Residues 206-208 are G5; that stretch reads SAL.

This sequence belongs to the TRAFAC class translation factor GTPase superfamily. Classic translation factor GTPase family. CysN/NodQ subfamily. As to quaternary structure, heterodimer composed of CysD, the smaller subunit, and CysN.

It carries out the reaction sulfate + ATP + H(+) = adenosine 5'-phosphosulfate + diphosphate. It participates in sulfur metabolism; hydrogen sulfide biosynthesis; sulfite from sulfate: step 1/3. Functionally, with CysD forms the ATP sulfurylase (ATPS) that catalyzes the adenylation of sulfate producing adenosine 5'-phosphosulfate (APS) and diphosphate, the first enzymatic step in sulfur assimilation pathway. APS synthesis involves the formation of a high-energy phosphoric-sulfuric acid anhydride bond driven by GTP hydrolysis by CysN coupled to ATP hydrolysis by CysD. This chain is Sulfate adenylyltransferase subunit 1, found in Salmonella arizonae (strain ATCC BAA-731 / CDC346-86 / RSK2980).